Consider the following 267-residue polypeptide: Ribosomal RNA small subunit methyltransferase A (267 aa).

S-adenosyl-L-methionine-binding residues include Asn18, Leu20, Gly45, Glu66, Asp91, and Asn112.

It belongs to the class I-like SAM-binding methyltransferase superfamily. rRNA adenine N(6)-methyltransferase family. RsmA subfamily.

The protein resides in the cytoplasm. It carries out the reaction adenosine(1518)/adenosine(1519) in 16S rRNA + 4 S-adenosyl-L-methionine = N(6)-dimethyladenosine(1518)/N(6)-dimethyladenosine(1519) in 16S rRNA + 4 S-adenosyl-L-homocysteine + 4 H(+). Functionally, specifically dimethylates two adjacent adenosines (A1518 and A1519) in the loop of a conserved hairpin near the 3'-end of 16S rRNA in the 30S particle. May play a critical role in biogenesis of 30S subunits. This chain is Ribosomal RNA small subunit methyltransferase A, found in Shewanella amazonensis (strain ATCC BAA-1098 / SB2B).